The chain runs to 270 residues: NAD(P)H-hydrate epimerase (270 aa).

In terms of domain architecture, YjeF N-terminal spans 25–234; that stretch reads FQQLMDLMQN…DLLAPEAIYQ (210 aa). (6S)-NADPHX is bound at residue 73–77; sequence DNGGQ. 2 residues coordinate K(+): Asn-74 and Asp-144. (6S)-NADPHX is bound by residues 148–154 and Glu-177; that span reads GVGLYGH. Thr-180 lines the K(+) pocket.

Belongs to the NnrE/AIBP family. It depends on K(+) as a cofactor.

It catalyses the reaction (6R)-NADHX = (6S)-NADHX. The catalysed reaction is (6R)-NADPHX = (6S)-NADPHX. Its function is as follows. Catalyzes the epimerization of the S- and R-forms of NAD(P)HX, a damaged form of NAD(P)H that is a result of enzymatic or heat-dependent hydration. This is a prerequisite for the S-specific NAD(P)H-hydrate dehydratase to allow the repair of both epimers of NAD(P)HX. This Legionella pneumophila serogroup 1 (strain 2300/99 Alcoy) protein is NAD(P)H-hydrate epimerase.